The chain runs to 229 residues: Mediator of RNA polymerase II transcription subunit 7 (229 aa).

Belongs to the Mediator complex subunit 7 family. In terms of assembly, component of the Mediator complex.

The protein resides in the nucleus. Functionally, component of the Mediator complex, a coactivator involved in the regulated transcription of nearly all RNA polymerase II-dependent genes. Mediator functions as a bridge to convey information from gene-specific regulatory proteins to the basal RNA polymerase II transcription machinery. Mediator is recruited to promoters by direct interactions with regulatory proteins and serves as a scaffold for the assembly of a functional preinitiation complex with RNA polymerase II and the general transcription factors. This is Mediator of RNA polymerase II transcription subunit 7 (med7) from Xenopus tropicalis (Western clawed frog).